The sequence spans 641 residues: Probable potassium transport system protein Kup (641 aa).

The segment covering 1-14 (MALDSESSASNRQG) has biased composition (polar residues). Residues 1-20 (MALDSESSASNRQGSRNEQD) are disordered. The next 12 helical transmembrane spans lie at 29–49 (LCLTALGVVYGDIATSPLYAF), 69–89 (ILSLIFWALIILVSIKYLLII), 120–140 (VLIVLGLFGAALLYGDGMITP), 156–176 (PQLTSYIIPATTVILVLLFMV), 188–208 (FGPIMLVWFVVIALLGLNGII), 236–256 (VLGGVFLALTGAEALYADMGH), 267–287 (FALVLPALLLNYFGQGALLLL), 307–327 (LVGLATLATIIASQAIISGVF), 355–375 (VYVPAANWFMMIAAVWLVLHF), 384–404 (AFGIAVSGTMVITTILAFFVM), 410–430 (WNILTAVAVTVGFLIIDLAFF), and 437–457 (ITDGGWFPLAIAVFIFTLMIT).

It belongs to the HAK/KUP transporter (TC 2.A.72) family.

The protein localises to the cell inner membrane. The catalysed reaction is K(+)(in) + H(+)(in) = K(+)(out) + H(+)(out). Its function is as follows. Transport of potassium into the cell. Likely operates as a K(+):H(+) symporter. The protein is Probable potassium transport system protein Kup of Nitrosomonas eutropha (strain DSM 101675 / C91 / Nm57).